Consider the following 314-residue polypeptide: Olfactory receptor 5P72 (314 aa).

At 1 to 28 the chain is on the extracellular side; sequence MAFLEVGNHTAVTEFILLGLTDDPVLRV. Asn-8 is a glycosylation site (N-linked (GlcNAc...) asparagine). A helical membrane pass occupies residues 29 to 49; sequence VLFTIILCIYLVTVMGNLSTI. Residues 50–57 are Cytoplasmic-facing; sequence LLIRVSSQ. The chain crosses the membrane as a helical span at residues 58–78; that stretch reads LHHPMYFFLSHLASVDMGLSS. The Extracellular portion of the chain corresponds to 79–102; that stretch reads SVTPNMLLNFLIERNTISYLGCGI. The cysteines at positions 100 and 192 are disulfide-linked. A helical membrane pass occupies residues 103 to 123; the sequence is QQSLADFFGSVECFLLAAMAY. Over 124–136 the chain is Cytoplasmic; it reads DRFMAICNPLLYS. The chain crosses the membrane as a helical span at residues 137–157; sequence TKMSTKVCVQLVVGSYIGGFL. Residues 158–199 lie on the Extracellular side of the membrane; sequence NASLIMFYFFSFLFCGPNRVDHFFCDFAPLVELSCSDVSVSV. The helical transmembrane segment at 200-220 threads the bilayer; that stretch reads IVISFSAGSVTMITVFVIAVS. Over 221 to 240 the chain is Cytoplasmic; that stretch reads YSYILITILKMHSIEGRHKA. A helical transmembrane segment spans residues 241–261; sequence FSTCTSHLTAVTLYYGTITFI. The Extracellular portion of the chain corresponds to 262–274; sequence YVMPKSSFSTDQN. The helical transmembrane segment at 275-295 threads the bilayer; the sequence is KVVSVFYMVMIPMLNPLIYSL. The Cytoplasmic segment spans residues 296–314; sequence RNNEIKGAIKRQLGKKMSC.

This sequence belongs to the G-protein coupled receptor 1 family.

It is found in the cell membrane. Its function is as follows. Potential odorant receptor. This Mus musculus (Mouse) protein is Olfactory receptor 5P72.